A 275-amino-acid chain; its full sequence is Tryptophan synthase alpha chain (275 aa).

Catalysis depends on Glu51, which acts as the Proton acceptor.

The protein belongs to the TrpA family. As to quaternary structure, tetramer of two alpha and two beta chains.

The enzyme catalyses (1S,2R)-1-C-(indol-3-yl)glycerol 3-phosphate + L-serine = D-glyceraldehyde 3-phosphate + L-tryptophan + H2O. It participates in amino-acid biosynthesis; L-tryptophan biosynthesis; L-tryptophan from chorismate: step 5/5. In terms of biological role, the alpha subunit is responsible for the aldol cleavage of indoleglycerol phosphate to indole and glyceraldehyde 3-phosphate. The chain is Tryptophan synthase alpha chain from Caulobacter vibrioides (strain ATCC 19089 / CIP 103742 / CB 15) (Caulobacter crescentus).